We begin with the raw amino-acid sequence, 71 residues long: Cytochrome c oxidase subunit 8C, mitochondrial (71 aa).

A mitochondrion-targeting transit peptide spans 1 to 28 (MAHLPRVCPFIRRLRVALLCLRPGHRFA). The Mitochondrial matrix portion of the chain corresponds to 29 to 39 (HSEPQRQRPAS). Residues 40–63 (ALEMAVGIVVIFSAFLTPSAYVLS) form a helical membrane-spanning segment. Residues 64-71 (NLSQFRRE) are Mitochondrial intermembrane-facing.

Belongs to the cytochrome c oxidase VIII family. Component of the cytochrome c oxidase (complex IV, CIV), a multisubunit enzyme composed of 14 subunits. The complex is composed of a catalytic core of 3 subunits MT-CO1, MT-CO2 and MT-CO3, encoded in the mitochondrial DNA, and 11 supernumerary subunits COX4I, COX5A, COX5B, COX6A, COX6B, COX6C, COX7A, COX7B, COX7C, COX8 and NDUFA4, which are encoded in the nuclear genome. The complex exists as a monomer or a dimer and forms supercomplexes (SCs) in the inner mitochondrial membrane with NADH-ubiquinone oxidoreductase (complex I, CI) and ubiquinol-cytochrome c oxidoreductase (cytochrome b-c1 complex, complex III, CIII), resulting in different assemblies (supercomplex SCI(1)III(2)IV(1) and megacomplex MCI(2)III(2)IV(2)).

Its subcellular location is the mitochondrion inner membrane. The protein operates within energy metabolism; oxidative phosphorylation. Component of the cytochrome c oxidase, the last enzyme in the mitochondrial electron transport chain which drives oxidative phosphorylation. The respiratory chain contains 3 multisubunit complexes succinate dehydrogenase (complex II, CII), ubiquinol-cytochrome c oxidoreductase (cytochrome b-c1 complex, complex III, CIII) and cytochrome c oxidase (complex IV, CIV), that cooperate to transfer electrons derived from NADH and succinate to molecular oxygen, creating an electrochemical gradient over the inner membrane that drives transmembrane transport and the ATP synthase. Cytochrome c oxidase is the component of the respiratory chain that catalyzes the reduction of oxygen to water. Electrons originating from reduced cytochrome c in the intermembrane space (IMS) are transferred via the dinuclear copper A center (CU(A)) of subunit 2 and heme A of subunit 1 to the active site in subunit 1, a binuclear center (BNC) formed by heme A3 and copper B (CU(B)). The BNC reduces molecular oxygen to 2 water molecules using 4 electrons from cytochrome c in the IMS and 4 protons from the mitochondrial matrix. In Eulemur fulvus fulvus (Brown lemur), this protein is Cytochrome c oxidase subunit 8C, mitochondrial (COX8C).